Consider the following 506-residue polypeptide: Acrylate reductase flavoprotein subunit (506 aa).

Residues 1-30 (MSNKDLLGRRNFIKGMGAAAGVAMAAPALA) constitute a signal peptide (tat-type signal). Residues A54, E74, N82, G87, and G88 each coordinate FAD. R333 acts as the Proton donor in catalysis. FAD is bound by residues E473 and I489.

Belongs to the FAD-dependent oxidoreductase 2 family. FRD/SDH subfamily. The ArdAB flavocytochrome c is composed of a FAD-containing subunit (ArdA) and a heme c-containing subunit (ArdB). The cofactor is FAD. Post-translationally, predicted to be exported by the Tat system. The position of the signal peptide cleavage has not been experimentally proven.

The protein resides in the periplasm. With respect to regulation, methacrylate acts as a competitive inhibitor of the acrylate reductase activity and suppresses the reductase activity in dose-dependent manner. Its function is as follows. FAD-containing subunit of the ArdAB flavocytochrome c, which catalyzes the reduction of acrylate to propanoate and supports dimethylsulfoniopropionate-dependent anaerobic respiration. In vitro, can use the artificial electron donor methyl viologen. The natural electron donor is probably a low-potential cytochrome c. Also shows weak activity toward methacrylate in vitro (at a 22-fold lower rate) but cannot use other tested 2-enoates, including crotonic, fumaric, sorbic, urocanic, cinnamic, p-coumaric, caffeic or ferulic acids. The protein catalyzes a unidirectional reaction and cannot oxidize propanoate with phenazine metasulfate and dichlorophenolindophenol as electron acceptors. In Shewanella woodyi (strain ATCC 51908 / MS32), this protein is Acrylate reductase flavoprotein subunit.